A 132-amino-acid polypeptide reads, in one-letter code: Small ribosomal subunit protein eS12 (132 aa).

This sequence belongs to the eukaryotic ribosomal protein eS12 family.

The protein resides in the cytoplasm. The sequence is that of Small ribosomal subunit protein eS12 (rps12) from Xenopus laevis (African clawed frog).